The following is a 160-amino-acid chain: CXXC motif containing zinc binding protein (160 aa).

Residues C33, C36, C67, and C70 each coordinate Zn(2+).

This sequence belongs to the UPF0587 family.

The polypeptide is CXXC motif containing zinc binding protein (czib) (Xenopus laevis (African clawed frog)).